A 448-amino-acid polypeptide reads, in one-letter code: tRNA-2-methylthio-N(6)-dimethylallyladenosine synthase (448 aa).

Positions 3–119 (GRVYVKTHGC…LPEMIDRARD (117 aa)) constitute an MTTase N-terminal domain. [4Fe-4S] cluster is bound by residues cysteine 12, cysteine 49, cysteine 82, cysteine 156, cysteine 160, and cysteine 163. One can recognise a Radical SAM core domain in the interval 142 to 374 (RAEGPTAFVS…QETINANARR (233 aa)). A TRAM domain is found at 377 to 440 (ESMVGTVQRV…PNSLRGELLG (64 aa)).

The protein belongs to the methylthiotransferase family. MiaB subfamily. As to quaternary structure, monomer. It depends on [4Fe-4S] cluster as a cofactor.

Its subcellular location is the cytoplasm. The catalysed reaction is N(6)-dimethylallyladenosine(37) in tRNA + (sulfur carrier)-SH + AH2 + 2 S-adenosyl-L-methionine = 2-methylsulfanyl-N(6)-dimethylallyladenosine(37) in tRNA + (sulfur carrier)-H + 5'-deoxyadenosine + L-methionine + A + S-adenosyl-L-homocysteine + 2 H(+). Catalyzes the methylthiolation of N6-(dimethylallyl)adenosine (i(6)A), leading to the formation of 2-methylthio-N6-(dimethylallyl)adenosine (ms(2)i(6)A) at position 37 in tRNAs that read codons beginning with uridine. This chain is tRNA-2-methylthio-N(6)-dimethylallyladenosine synthase, found in Alkalilimnicola ehrlichii (strain ATCC BAA-1101 / DSM 17681 / MLHE-1).